The following is a 146-amino-acid chain: Small ribosomal subunit protein uS9x (146 aa).

The protein belongs to the universal ribosomal protein uS9 family.

It is found in the cytoplasm. The chain is Small ribosomal subunit protein uS9x (RPS16C) from Arabidopsis thaliana (Mouse-ear cress).